The following is a 307-amino-acid chain: Ribonuclease Z (307 aa).

Zn(2+) contacts are provided by histidine 62, histidine 64, aspartate 66, histidine 67, histidine 139, aspartate 210, and histidine 268. Aspartate 66 (proton acceptor) is an active-site residue.

Belongs to the RNase Z family. In terms of assembly, homodimer. It depends on Zn(2+) as a cofactor.

It catalyses the reaction Endonucleolytic cleavage of RNA, removing extra 3' nucleotides from tRNA precursor, generating 3' termini of tRNAs. A 3'-hydroxy group is left at the tRNA terminus and a 5'-phosphoryl group is left at the trailer molecule.. Functionally, zinc phosphodiesterase, which displays some tRNA 3'-processing endonuclease activity. Probably involved in tRNA maturation, by removing a 3'-trailer from precursor tRNA. This is Ribonuclease Z from Myxococcus xanthus (strain DK1622).